Reading from the N-terminus, the 146-residue chain is 3-dehydroquinate dehydratase (146 aa).

The Proton acceptor role is filled by Y23. Substrate contacts are provided by N74, H80, and D87. H100 functions as the Proton donor in the catalytic mechanism. Residues I101–S102 and R111 contribute to the substrate site.

The protein belongs to the type-II 3-dehydroquinase family. In terms of assembly, homododecamer.

It carries out the reaction 3-dehydroquinate = 3-dehydroshikimate + H2O. Its pathway is metabolic intermediate biosynthesis; chorismate biosynthesis; chorismate from D-erythrose 4-phosphate and phosphoenolpyruvate: step 3/7. Functionally, catalyzes a trans-dehydration via an enolate intermediate. This chain is 3-dehydroquinate dehydratase, found in Bacillus mycoides (strain KBAB4) (Bacillus weihenstephanensis).